The primary structure comprises 72 residues: Translation initiation factor IF-1 (72 aa).

The 72-residue stretch at 1–72 (MAKEEVLEFP…TKGRITYRLK (72 aa)) folds into the S1-like domain.

The protein belongs to the IF-1 family. Component of the 30S ribosomal translation pre-initiation complex which assembles on the 30S ribosome in the order IF-2 and IF-3, IF-1 and N-formylmethionyl-tRNA(fMet); mRNA recruitment can occur at any time during PIC assembly.

The protein localises to the cytoplasm. Its function is as follows. One of the essential components for the initiation of protein synthesis. Stabilizes the binding of IF-2 and IF-3 on the 30S subunit to which N-formylmethionyl-tRNA(fMet) subsequently binds. Helps modulate mRNA selection, yielding the 30S pre-initiation complex (PIC). Upon addition of the 50S ribosomal subunit IF-1, IF-2 and IF-3 are released leaving the mature 70S translation initiation complex. The protein is Translation initiation factor IF-1 of Brucella suis biovar 1 (strain 1330).